Consider the following 118-residue polypeptide: Transcription factor PAR1 (118 aa).

The segment at M1–E58 is disordered. Polar residues predominate over residues R13–V23. One can recognise a bHLH domain in the interval A43–L92.

This sequence belongs to the bHLH protein family. As to quaternary structure, homodimer.

It localises to the nucleus. In terms of biological role, atypical bHLH transcription factor that acts as a negative regulator of a variety of shade avoidance syndrome (SAS) responses, including seedling elongation and photosynthetic pigment accumulation. Acts as a direct transcriptional repressor of two auxin-responsive genes, SAUR15 and SAUR68. May function in integrating shade and hormone transcriptional networks in response to light and auxin changes. This is Transcription factor PAR1 (PAR1) from Arabidopsis thaliana (Mouse-ear cress).